We begin with the raw amino-acid sequence, 255 residues long: Sulfate transporter CysZ (255 aa).

Helical transmembrane passes span 26-46 (LFVL…IYFA), 71-91 (LLWP…FTML), 150-170 (LFIL…WLLF), and 211-231 (IVYL…AAVA).

Belongs to the CysZ family.

It localises to the cell inner membrane. High affinity, high specificity proton-dependent sulfate transporter, which mediates sulfate uptake. Provides the sulfur source for the cysteine synthesis pathway. In Pseudomonas fluorescens (strain SBW25), this protein is Sulfate transporter CysZ.